The chain runs to 95 residues: MLCIYVCGVCLCVCFSVCMCVHVLCVYVHVCTYAHIWTTALHLRCLLPKSFSTLLFKAGFGIDTCVIPSFSMGMLVVFMASMLPTEPPPSPWVAH.

The sequence is that of Putative per-hexamer repeat protein 4 (Phxr4) from Mus musculus (Mouse).